A 2109-amino-acid chain; its full sequence is General transcription factor 3C polypeptide 1 (2109 aa).

The interval 467-521 (LPEGEDTFLSESDSEEERSSSKRRGRGSQKDTRASANLRPKTQPHHSTPTKGGWK) is disordered. A compositionally biased stretch (acidic residues) spans 469-482 (EGEDTFLSESDSEE). Lys-529 is covalently cross-linked (Glycyl lysine isopeptide (Lys-Gly) (interchain with G-Cter in SUMO2)). Positions 586 to 609 (MENPKESSSSLKTGRHSSGQDKPH) are disordered. A Phosphoserine modification is found at Ser-667. Residues 718-727 (STANRVKTSQ) are compositionally biased toward polar residues. The tract at residues 718–775 (STANRVKTSQPPVPQGEAEEDSQGKEGPSGSGDSQLSASSRSESGRMKKSDNKMGITP) is disordered. Ser-739 bears the Phosphoserine mark. Residues 748 to 759 (SGDSQLSASSRS) are compositionally biased toward low complexity. Basic and acidic residues predominate over residues 760-769 (ESGRMKKSDN). Glycyl lysine isopeptide (Lys-Gly) (interchain with G-Cter in SUMO2) cross-links involve residues Lys-770 and Lys-833. Disordered stretches follow at residues 836 to 857 (SGRAGVRPSSSGSAWEACSEAP) and 1059 to 1082 (RKNSSTDQGSDEEGSLQKEQESAM). Ser-1062 and Ser-1068 each carry phosphoserine. Residues 1073 to 1082 (SLQKEQESAM) show a composition bias toward basic and acidic residues. Residue Lys-1142 forms a Glycyl lysine isopeptide (Lys-Gly) (interchain with G-Cter in SUMO2) linkage. Residues 1202 to 1241 (SLDRNRRVRGGKSQKRKRLKKDPGKKIKRKKKGEFPGEKS) are disordered. The segment covering 1207 to 1221 (RRVRGGKSQKRKRLK) has biased composition (basic residues). Phosphoserine is present on residues Ser-1253 and Ser-1611. Positions 1608 to 1631 (KDGSLEDDEDEEDDLDEGVGGKRR) are disordered. Positions 1612–1624 (LEDDEDEEDDLDE) are enriched in acidic residues. A phosphoserine mark is found at Ser-1632 and Ser-1653. Residues 1823 to 1833 (EDADIQREDPQ) show a composition bias toward basic and acidic residues. The segment at 1823–1961 (EDADIQREDP…GSEDPRGFTE (139 aa)) is disordered. The span at 1838 to 1848 (EGSSSEDSPPE) shows a compositional bias: low complexity. A phosphoserine mark is found at Ser-1856, Ser-1865, Ser-1868, Ser-1896, and Ser-1911. The segment covering 1916 to 1926 (LEDTAAAGAAQ) has biased composition (low complexity). The segment covering 1937–1947 (SPGQEQLSGQA) has biased composition (polar residues). A Phosphoserine modification is found at Ser-1969.

The protein belongs to the TFIIIC subunit 1 family. In terms of assembly, part of the TFIIIC subcomplex TFIIIC2, consisting of six subunits, GTF3C1, GTF3C2, GTF3C3, GTF3C4, GTF3C5 and GTF3C6. Interacts with IGHMBP2. Interacts with MAF1.

It is found in the nucleus. In terms of biological role, required for RNA polymerase III-mediated transcription. Component of TFIIIC that initiates transcription complex assembly on tRNA and is required for transcription of 5S rRNA and other stable nuclear and cytoplasmic RNAs. Binds to the box B promoter element. In Homo sapiens (Human), this protein is General transcription factor 3C polypeptide 1 (GTF3C1).